Reading from the N-terminus, the 127-residue chain is Fluoride-specific ion channel FluC (127 aa).

4 helical membrane-spanning segments follow: residues 4 to 24 (SLLA…GLGM), 35 to 55 (PGTL…IAFF), 68 to 88 (LLIT…AEVV), and 96 to 116 (ILWA…MTAA). Positions 75 and 78 each coordinate Na(+).

This sequence belongs to the fluoride channel Fluc/FEX (TC 1.A.43) family.

It localises to the cell inner membrane. The enzyme catalyses fluoride(in) = fluoride(out). With respect to regulation, na(+) is not transported, but it plays an essential structural role and its presence is essential for fluoride channel function. Its function is as follows. Fluoride-specific ion channel. Important for reducing fluoride concentration in the cell, thus reducing its toxicity. This is Fluoride-specific ion channel FluC from Pseudomonas putida (strain W619).